We begin with the raw amino-acid sequence, 219 residues long: Leukocyte surface antigen CD53 (219 aa).

Over 1–11 (MGMSSLKLLKF) the chain is Cytoplasmic. The chain crosses the membrane as a helical span at residues 12–32 (VLFFFNLIFWFCGCCILGLGI). Over 33–54 (YLLIHSKFGVLFHNLPSLTLGN) the chain is Extracellular. Residues 55 to 69 (VLVIVGSVIMVVAFL) traverse the membrane as a helical segment. Residues 70 to 80 (GCMGSIKENKC) are Cytoplasmic-facing. The helical transmembrane segment at 81-106 (LLMSFFVLLLIILLAEVTLAILLFVY) threads the bilayer. Residues 107–181 (EQKLKEYVAE…IQAKQWFHSN (75 aa)) lie on the Extracellular side of the membrane. 2 N-linked (GlcNAc...) asparagine glycosylation sites follow: Asn129 and Asn148. The helical transmembrane segment at 182–206 (FLYIGITTICVCVIQVLGMSFALTL) threads the bilayer. Residues 207–219 (NCQIDKTSQVLGL) are Cytoplasmic-facing.

Belongs to the tetraspanin (TM4SF) family. As to quaternary structure, interacts with SCIMP. Interacts with CD45/PTPRC. Interacts with IL7R. Interacts with RBL2 and PPP2CA.

It is found in the cell membrane. The protein resides in the cell junction. Its subcellular location is the membrane. It localises to the synapse. Functionally, structural component of specialized membrane microdomains known as tetraspanin-enriched microdomains (TERMs), which act as platforms for receptor clustering and signaling. Participates thereby in diverse biological functions such as cell signal transduction, adhesion, migration and protein trafficking. Plays a role in the activation of monocytes and B-cells. Acts as an essential regulator of B-cell development by promoting interleukin-7 receptor/IL7R signaling. Also promotes, in B-cells, the BCR signaling by recruiting PKC to the plasma membrane in order to phosphorylate its substrates. Plays an essential role in B- and T-cells homing to lymph nodes by stabilizing L-selectin/SELL cell surface expression. Also mediates metabolic and inflammatory functions in hepatocytes and adipose tissue by promoting TNF-alpha and LPS signaling independent of the immune compartment. The chain is Leukocyte surface antigen CD53 (CD53) from Bos taurus (Bovine).